A 174-amino-acid polypeptide reads, in one-letter code: NADH-quinone oxidoreductase subunit B 2 (174 aa).

Residues Cys53, Cys54, Cys118, and Cys148 each coordinate [4Fe-4S] cluster.

The protein belongs to the complex I 20 kDa subunit family. As to quaternary structure, NDH-1 is composed of 14 different subunits. Subunits NuoB, C, D, E, F, and G constitute the peripheral sector of the complex. Requires [4Fe-4S] cluster as cofactor.

Its subcellular location is the cell inner membrane. It carries out the reaction a quinone + NADH + 5 H(+)(in) = a quinol + NAD(+) + 4 H(+)(out). In terms of biological role, NDH-1 shuttles electrons from NADH, via FMN and iron-sulfur (Fe-S) centers, to quinones in the respiratory chain. Couples the redox reaction to proton translocation (for every two electrons transferred, four hydrogen ions are translocated across the cytoplasmic membrane), and thus conserves the redox energy in a proton gradient. This is NADH-quinone oxidoreductase subunit B 2 from Cereibacter sphaeroides (strain ATCC 17025 / ATH 2.4.3) (Rhodobacter sphaeroides).